A 173-amino-acid chain; its full sequence is Small ribosomal subunit protein uS5 (173 aa).

One can recognise an S5 DRBM domain in the interval 17-80 (WQERVIQIRR…ADGKKQLIEV (64 aa)).

This sequence belongs to the universal ribosomal protein uS5 family. In terms of assembly, part of the 30S ribosomal subunit. Contacts proteins S4 and S8.

With S4 and S12 plays an important role in translational accuracy. Its function is as follows. Located at the back of the 30S subunit body where it stabilizes the conformation of the head with respect to the body. The sequence is that of Small ribosomal subunit protein uS5 from Synechocystis sp. (strain ATCC 27184 / PCC 6803 / Kazusa).